The following is an 82-amino-acid chain: Short neurotoxin OKI-10 (82 aa).

Positions 1 to 20 are cleaved as a signal peptide; the sequence is KTLLLTLVVVTIVCLDLGYT. Intrachain disulfides connect cysteine 23-cysteine 44, cysteine 37-cysteine 61, cysteine 63-cysteine 74, and cysteine 75-cysteine 80.

The protein belongs to the three-finger toxin family. Short-chain subfamily. Type I alpha-neurotoxin sub-subfamily. In terms of tissue distribution, expressed by the venom gland.

It localises to the secreted. In terms of biological role, binds to muscle nicotinic acetylcholine receptor (nAChR) and inhibit acetylcholine from binding to the receptor, thereby impairing neuromuscular transmission. This Laticauda laticaudata (Blue-ringed sea krait) protein is Short neurotoxin OKI-10.